The sequence spans 86 residues: Small ribosomal subunit protein uS17 (86 aa).

It belongs to the universal ribosomal protein uS17 family. As to quaternary structure, part of the 30S ribosomal subunit.

In terms of biological role, one of the primary rRNA binding proteins, it binds specifically to the 5'-end of 16S ribosomal RNA. The polypeptide is Small ribosomal subunit protein uS17 (Bifidobacterium longum (strain DJO10A)).